Consider the following 69-residue polypeptide: Pancreatic secretory trypsin inhibitor (69 aa).

The 58-residue stretch at 8 to 65 (TGTEAACSNYDLKKGCAKIFDPVCGTDNILYSNECLLCFQNLQRKTNVRIKRRGTCQE) folds into the Kazal-like domain. Disulfide bonds link Cys14–Cys45, Cys23–Cys42, and Cys31–Cys63.

It localises to the secreted. Functionally, this is a trypsin inhibitor, its physiological function is to prevent the trypsin-catalyzed premature activation of zymogens within the pancreas. The chain is Pancreatic secretory trypsin inhibitor (SPINK1) from Struthio camelus (Common ostrich).